The following is a 324-amino-acid chain: Phospho-N-acetylmuramoyl-pentapeptide-transferase (324 aa).

10 helical membrane passes run 9–29 (TFAV…PFLV), 53–73 (TMGA…FSFI), 77–97 (VSAA…LGFL), 117–137 (FLGQ…SDFA), 149–169 (IDLG…FSNA), 176–196 (LDGL…VIAF), 201–221 (MDVA…LLFN), 227–247 (IFMG…VSIL), 253–273 (LLLL…LQVF), and 304–324 (VLTF…VVIF).

This sequence belongs to the glycosyltransferase 4 family. MraY subfamily. Requires Mg(2+) as cofactor.

The protein resides in the cell membrane. It carries out the reaction UDP-N-acetyl-alpha-D-muramoyl-L-alanyl-gamma-D-glutamyl-meso-2,6-diaminopimeloyl-D-alanyl-D-alanine + di-trans,octa-cis-undecaprenyl phosphate = di-trans,octa-cis-undecaprenyl diphospho-N-acetyl-alpha-D-muramoyl-L-alanyl-D-glutamyl-meso-2,6-diaminopimeloyl-D-alanyl-D-alanine + UMP. It functions in the pathway cell wall biogenesis; peptidoglycan biosynthesis. Functionally, catalyzes the initial step of the lipid cycle reactions in the biosynthesis of the cell wall peptidoglycan: transfers peptidoglycan precursor phospho-MurNAc-pentapeptide from UDP-MurNAc-pentapeptide onto the lipid carrier undecaprenyl phosphate, yielding undecaprenyl-pyrophosphoryl-MurNAc-pentapeptide, known as lipid I. This chain is Phospho-N-acetylmuramoyl-pentapeptide-transferase, found in Listeria innocua serovar 6a (strain ATCC BAA-680 / CLIP 11262).